Reading from the N-terminus, the 255-residue chain is MRILCTNDDGIHAPGLKIVEDIARALSDDVWVVAPELDQSGVSHSLSLNDPLRLREVGPRHFAVRGTPTDCVIMGARHILADKAPDLVLSGVNRGRNVAEDVVYSGTIAGALEGTILGLPSFALSQEFTLETRNAPLWDTAKAHGPEILRKAIKAGVPKNTVININFPACAPDEVAGVQVTRQGKRNQGFLRVDERHDGRGNPYFWIGFERVAVVDMPAEGTDLAALAAKYISVTPLRLDRTDEAFSATLAKTLG.

A divalent metal cation is bound by residues Asp8, Asp9, Ser40, and Asn93.

Belongs to the SurE nucleotidase family. A divalent metal cation is required as a cofactor.

The protein resides in the cytoplasm. It catalyses the reaction a ribonucleoside 5'-phosphate + H2O = a ribonucleoside + phosphate. In terms of biological role, nucleotidase that shows phosphatase activity on nucleoside 5'-monophosphates. This chain is 5'-nucleotidase SurE, found in Rhodopseudomonas palustris (strain HaA2).